The primary structure comprises 276 residues: Tryptophan synthase alpha chain (276 aa).

Active-site proton acceptor residues include Glu46 and Glu57.

The protein belongs to the TrpA family. Tetramer of two alpha and two beta chains.

The catalysed reaction is (1S,2R)-1-C-(indol-3-yl)glycerol 3-phosphate + L-serine = D-glyceraldehyde 3-phosphate + L-tryptophan + H2O. Its pathway is amino-acid biosynthesis; L-tryptophan biosynthesis; L-tryptophan from chorismate: step 5/5. Its function is as follows. The alpha subunit is responsible for the aldol cleavage of indoleglycerol phosphate to indole and glyceraldehyde 3-phosphate. In Halobacterium salinarum (strain ATCC 29341 / DSM 671 / R1), this protein is Tryptophan synthase alpha chain.